A 214-amino-acid chain; its full sequence is Adenylate kinase (214 aa).

Residue 10 to 15 coordinates ATP; that stretch reads GTGKGT. The tract at residues 30 to 59 is NMP; the sequence is STGDILRENIQKKNTIGKKIHNILKNGELV. AMP is bound by residues T31, R36, 57–59, 85–88, and Q92; these read ELV and GFPR. Residues 122 to 159 form an LID region; the sequence is GRRVHTPSGRIYNINYNPPREEGKDDLTQEKLTIREDD. ATP is bound by residues R123 and 132–133; that span reads IY. AMP is bound by residues R156 and R167. Q200 contributes to the ATP binding site.

Belongs to the adenylate kinase family. Monomer.

The protein resides in the cytoplasm. The enzyme catalyses AMP + ATP = 2 ADP. The protein operates within purine metabolism; AMP biosynthesis via salvage pathway; AMP from ADP: step 1/1. Catalyzes the reversible transfer of the terminal phosphate group between ATP and AMP. Plays an important role in cellular energy homeostasis and in adenine nucleotide metabolism. The protein is Adenylate kinase of Buchnera aphidicola subsp. Schizaphis graminum (strain Sg).